The primary structure comprises 173 residues: Probable xanthine dehydrogenase subunit E (173 aa).

The 77-residue stretch at 14 to 90 folds into the 2Fe-2S ferredoxin-type domain; that stretch reads EQFRMTVNGQ…GHSITTIEGL (77 aa). [2Fe-2S] cluster is bound by residues C52, C57, C60, C72, C110, C113, C145, and C147.

In terms of assembly, could be composed of four subunits: PucA, PucC, PucD and PucE. [2Fe-2S] cluster serves as cofactor.

The catalysed reaction is xanthine + NAD(+) + H2O = urate + NADH + H(+). It carries out the reaction hypoxanthine + NAD(+) + H2O = xanthine + NADH + H(+). Its pathway is purine metabolism; hypoxanthine degradation; urate from hypoxanthine: step 1/2. It participates in purine metabolism; hypoxanthine degradation; urate from hypoxanthine: step 2/2. Functionally, oxidizes hypoxanthine and xanthine to uric acid. The sequence is that of Probable xanthine dehydrogenase subunit E (pucE) from Bacillus subtilis (strain 168).